A 290-amino-acid polypeptide reads, in one-letter code: Light-independent protochlorophyllide reductase iron-sulfur ATP-binding protein (290 aa).

ATP-binding positions include glycine 10–threonine 15 and lysine 39. A Mg(2+)-binding site is contributed by serine 14. Positions 95 and 129 each coordinate [4Fe-4S] cluster. ATP is bound at residue asparagine 180–arginine 181.

The protein belongs to the NifH/BchL/ChlL family. In terms of assembly, homodimer. Protochlorophyllide reductase is composed of three subunits; ChlL, ChlN and ChlB. It depends on [4Fe-4S] cluster as a cofactor.

It is found in the plastid. The protein resides in the chloroplast. The catalysed reaction is chlorophyllide a + oxidized 2[4Fe-4S]-[ferredoxin] + 2 ADP + 2 phosphate = protochlorophyllide a + reduced 2[4Fe-4S]-[ferredoxin] + 2 ATP + 2 H2O. It functions in the pathway porphyrin-containing compound metabolism; chlorophyll biosynthesis (light-independent). Component of the dark-operative protochlorophyllide reductase (DPOR) that uses Mg-ATP and reduced ferredoxin to reduce ring D of protochlorophyllide (Pchlide) to form chlorophyllide a (Chlide). This reaction is light-independent. The L component serves as a unique electron donor to the NB-component of the complex, and binds Mg-ATP. The chain is Light-independent protochlorophyllide reductase iron-sulfur ATP-binding protein from Anthoceros angustus (Hornwort).